We begin with the raw amino-acid sequence, 1742 residues long: NACHT and WD repeat domain-containing protein 2 (1742 aa).

5 LRR repeats span residues phenylalanine 386–asparagine 410, leucine 677–serine 698, valine 724–glutamine 747, tyrosine 883–phenylalanine 906, and leucine 925–aspartate 953. One can recognise an NACHT domain in the interval asparagine 410–leucine 737. 11 WD repeats span residues leucine 963 to glutamine 1004, threonine 1007 to glutamate 1046, phenylalanine 1140 to leucine 1179, arginine 1229 to glutamine 1271, glutamate 1272 to asparagine 1311, lysine 1314 to valine 1353, lysine 1355 to arginine 1394, asparagine 1396 to asparagine 1434, glutamate 1476 to arginine 1516, asparagine 1522 to valine 1561, and serine 1614 to leucine 1653. The interval proline 1702–asparagine 1721 is disordered. Positions isoleucine 1703–threonine 1715 are enriched in polar residues.

In Mus musculus (Mouse), this protein is NACHT and WD repeat domain-containing protein 2 (Nwd2).